We begin with the raw amino-acid sequence, 221 residues long: MFGFHKPKMYRSIEGCCICRAKSSSSRFTDSKRYEKDFQSCFGLHETRSGDICNACVLLVKRWKKLPAGSKKNWNHVVDARAGPSLKTTLKPKKVKTLSGNRMKSNQISKLQKEFKRHNSDAHSTTSSASPAQSPCYSNQSDEGSDTEMASSSNRTPVFSFLDLTYWKRQKICCGIIYKGRFGEVLIDTHLFKPCCSSKKAAAEKPEEQGPAPLPISTQEW.

Disordered stretches follow at residues 110–153 (KLQK…ASSS) and 201–221 (AAAEKPEEQGPAPLPISTQEW). Residues 111–121 (LQKEFKRHNSD) are compositionally biased toward basic and acidic residues. Low complexity predominate over residues 124-135 (STTSSASPAQSP). Polar residues predominate over residues 136–153 (CYSNQSDEGSDTEMASSS).

It belongs to the SINHCAF family. As to quaternary structure, component of the Sin3/HDAC corepressor complex at least composed of BRMS1, BRMS1L, ING2, SAP30, SAP30L, HDAC1. Found in a complex composed of at least SINHCAF, SIN3A, HDAC1, SAP30, RBBP4, OGT and TET1. Interacts with SIN3A and OGT. As to expression, embryonic stem cells (at protein level).

It is found in the nucleus. In terms of biological role, subunit of the Sin3 deacetylase complex (Sin3/HDAC), this subunit is important for the repression of genes encoding components of the TGF-beta signaling pathway. Core component of a SIN3A complex (composed of at least SINHCAF, SIN3A, HDAC1, SAP30, RBBP4, OGT and TET1) present in embryonic stem (ES) cells. Promotes the stability of SIN3A and its presence on chromatin and is essential for maintaining the potential of ES cells to proliferate rapidly, while ensuring a short G1-phase of the cell cycle, thereby preventing premature lineage priming. This is SIN3-HDAC complex-associated factor (Sinhcaf) from Mus musculus (Mouse).